The chain runs to 1249 residues: MAGE-like protein 2 (1249 aa).

Residues 1–10 (MSQLSKNLGD) are compositionally biased toward polar residues. Disordered stretches follow at residues 1–50 (MSQL…PPID), 134–233 (APGA…AQPP), 300–327 (QPPA…QPMA), 349–378 (PQVP…WQAT), 410–433 (RQGP…VRQA), 515–569 (QALP…LPAP), 647–679 (QPFQ…EVPT), 714–746 (LMTP…RAPS), 862–910 (PQAT…DWQG), and 930–957 (VSGD…ILSG). Pro residues-rich tracts occupy residues 40-49 (PPVPWDPPPI) and 140-233 (AHPP…AQPP). Residues 301–311 (PPASGAPMAQP) show a composition bias toward low complexity. Composition is skewed to pro residues over residues 312–324 (AAPP…PPAQ) and 349–358 (PQVPQGPQAP). Residues 369 to 378 (QATSPGWQAT) are compositionally biased toward polar residues. Residues 410-432 (RQGPPPIRPGPPPIRPGPPPVRQ) show a composition bias toward pro residues. Low complexity predominate over residues 525 to 552 (QAPQARLPAPQVQAAPQVPTAPPATQVP). The segment covering 553 to 567 (AAPPAGPQVPQPVLP) has biased composition (pro residues). The span at 662–675 (QLPPQQAQASGPQA) shows a compositional bias: low complexity. A compositionally biased stretch (basic and acidic residues) spans 725–746 (SIDRRGSSKERRTSSKERRAPS). Low complexity predominate over residues 862 to 871 (PQATATTQEA). Residues 881-891 (RSGKATRKKKH) show a composition bias toward basic residues. The 200-residue stretch at 1020 to 1219 (LDERANALVQ…QSWPFHYLEA (200 aa)) folds into the MAGE domain. Residues 1226–1235 (EDTDEDEPDT) show a composition bias toward acidic residues. Positions 1226–1249 (EDTDEDEPDTGDSAHGPTSRPPPR) are disordered.

In terms of assembly, part of a complex consisting of MAGEL2, TRIM27 and USP7; directly interacts with USP7. Interacts with TRIM27. Interacts with VPS35; leading to recruitment at retromer-containing endosomes. Interacts with BMAL1 and PER2. In terms of tissue distribution, expressed in placenta, fetal and adult brain. Not detected in heart and small intestine, very low levels in fibroblasts. Not expressed in brain of a Prader-Willi patient.

Its subcellular location is the early endosome. The protein resides in the cytoplasm. The protein localises to the nucleus. Probably enhances ubiquitin ligase activity of RING-type zinc finger-containing E3 ubiquitin-protein ligases, possibly through recruitment and/or stabilization of the Ubl-conjugating enzyme (E2) at the E3:substrate complex. Acts as a regulator of retrograde transport via its interaction with VPS35. Recruited to retromer-containing endosomes and promotes the formation of 'Lys-63'-linked polyubiquitin chains at 'Lys-220' of WASHC1 together with TRIM27, leading to promote endosomal F-actin assembly. Regulates the circadian clock by repressing the transcriptional activator activity of the CLOCK-BMAL1 heterodimer. Significantly promotes the cytoplasmic accumulation of CLOCK. This Homo sapiens (Human) protein is MAGE-like protein 2 (MAGEL2).